Consider the following 239-residue polypeptide: Endolytic peptidoglycan transglycosylase RlpA (239 aa).

The N-terminal stretch at 1 to 25 is a signal peptide; sequence MTLTRKTLFLLTAAFGTHSLQTASA. Positions 160–239 constitute an SPOR domain; it reads VAENKDIFID…GMVRAVLTAG (80 aa).

It belongs to the RlpA family.

Functionally, lytic transglycosylase with a strong preference for naked glycan strands that lack stem peptides. This Neisseria meningitidis serogroup B (strain ATCC BAA-335 / MC58) protein is Endolytic peptidoglycan transglycosylase RlpA.